A 302-amino-acid polypeptide reads, in one-letter code: Aliphatic sulfonates import ATP-binding protein SsuB (302 aa).

The segment covering 30–57 (PATADAQHTADAQHTADAQHTADAQHTA) has biased composition (low complexity). A disordered region spans residues 30–65 (PATADAQHTADAQHTADAQHTADAQHTAETAETRGA). The ABC transporter domain maps to 70 to 284 (IRIRGLRRTF…RRTDPAFDRL (215 aa)). An ATP-binding site is contributed by 102–109 (GRSGSGKS).

Belongs to the ABC transporter superfamily. Aliphatic sulfonates importer (TC 3.A.1.17.2) family. The complex is composed of two ATP-binding proteins (SsuB), two transmembrane proteins (SsuC) and a solute-binding protein (SsuA).

The protein resides in the cell membrane. The catalysed reaction is ATP + H2O + aliphatic sulfonate-[sulfonate-binding protein]Side 1 = ADP + phosphate + aliphatic sulfonateSide 2 + [sulfonate-binding protein]Side 1.. Functionally, part of the ABC transporter complex SsuABC involved in aliphatic sulfonates import. Responsible for energy coupling to the transport system. This chain is Aliphatic sulfonates import ATP-binding protein SsuB, found in Frankia casuarinae (strain DSM 45818 / CECT 9043 / HFP020203 / CcI3).